The chain runs to 399 residues: Pyridinium-3,5-bisthiocarboxylic acid mononucleotide nickel insertion protein (399 aa).

It belongs to the LarC family.

The enzyme catalyses Ni(II)-pyridinium-3,5-bisthiocarboxylate mononucleotide = pyridinium-3,5-bisthiocarboxylate mononucleotide + Ni(2+). Its function is as follows. Involved in the biosynthesis of a nickel-pincer cofactor ((SCS)Ni(II) pincer complex). Binds Ni(2+), and functions in nickel delivery to pyridinium-3,5-bisthiocarboxylic acid mononucleotide (P2TMN), to form the mature cofactor. Is thus probably required for the activation of nickel-pincer cofactor-dependent enzymes. The polypeptide is Pyridinium-3,5-bisthiocarboxylic acid mononucleotide nickel insertion protein (Clostridium kluyveri (strain ATCC 8527 / DSM 555 / NBRC 12016 / NCIMB 10680 / K1)).